The sequence spans 196 residues: Phosphatidyl-N-methylethanolamine N-methyltransferase (196 aa).

Position 1 (Met-1) is a topological domain, lumenal. An intramembrane region (helical) is located at residues 2–28 (AIFEINNSFLICAVSIALNPLLWNIAA). Topologically, residues 29–40 (RSEYNHKTLTKL) are lumenal. The helical transmembrane segment at 41–62 (ANGDSKKACYMLAACIFVAGIV) threads the bilayer. The Cytoplasmic segment spans residues 63 to 89 (RDLIYQNALKQQPTLGIFMNPLVQGIA). The helical transmembrane segment at 90-110 (KLIFCFGSVLVLSSMYKLGLV) threads the bilayer. Position 94–96 (94–96 (CFG)) interacts with S-adenosyl-L-methionine. The Lumenal segment spans residues 111–153 (GTYLGDYFGFLLPERVSGFPFNVNDNPMYNGSTLCFLSTALRY). A helical transmembrane segment spans residues 154 to 174 (GKVAGLLLTLEVFFVYRIALK). Residues 175-196 (FEEPFTAKIYAARDSKQAKKSE) are Cytoplasmic-facing. Residue 176-177 (EE) coordinates S-adenosyl-L-methionine.

It belongs to the class VI-like SAM-binding methyltransferase superfamily. PEMT/PEM2 methyltransferase family.

It is found in the endoplasmic reticulum membrane. The protein localises to the mitochondrion membrane. The enzyme catalyses a 1,2-diacyl-sn-glycero-3-phospho-N-methylethanolamine + S-adenosyl-L-methionine = a 1,2-diacyl-sn-glycero-3-phospho-N,N-dimethylethanolamine + S-adenosyl-L-homocysteine + H(+). It catalyses the reaction a 1,2-diacyl-sn-glycero-3-phospho-N,N-dimethylethanolamine + S-adenosyl-L-methionine = a 1,2-diacyl-sn-glycero-3-phosphocholine + S-adenosyl-L-homocysteine + H(+). It participates in phospholipid metabolism; phosphatidylcholine biosynthesis. In terms of biological role, catalyzes the second two steps of the methylation pathway of phosphatidylcholine biosynthesis, the SAM-dependent methylation of phosphatidylmonomethylethanolamine (PMME) to phosphatidyldimethylethanolamine (PDME) and of PDME to phosphatidylcholine (PC). The protein is Phosphatidyl-N-methylethanolamine N-methyltransferase of Schizosaccharomyces pombe (strain 972 / ATCC 24843) (Fission yeast).